Reading from the N-terminus, the 189-residue chain is Ras-like protein 1 (189 aa).

GTP is bound at residue 10-17 (GAGGVGKS). Residues 32–40 (YDPTIEDSY) carry the Effector region motif. GTP-binding positions include 57 to 61 (DTAGQ) and 116 to 119 (NKCD). A Cysteine methyl ester modification is found at Cys-186. Residue Cys-186 is the site of S-geranylgeranyl cysteine attachment. The propeptide at 187 to 189 (KML) is removed in mature form.

This sequence belongs to the small GTPase superfamily. Ras family.

Its subcellular location is the cell membrane. The catalysed reaction is GTP + H2O = GDP + phosphate + H(+). Its activity is regulated as follows. Alternates between an inactive form bound to GDP and an active form bound to GTP. Activated by a guanine nucleotide-exchange factor (GEF) and inactivated by a GTPase-activating protein (GAP). Its function is as follows. Ras proteins bind GDP/GTP and possess intrinsic GTPase activity. Plays a role in eye development by regulating cell growth, survival of postmitotic ommatidial cells and differentiation of photoreceptor cells. During larval development, mediates Ptth/tor signaling leading to the production of ecdysone, a hormone required for the initiation of metamorphosis. The chain is Ras-like protein 1 from Drosophila willistoni (Fruit fly).